A 222-amino-acid polypeptide reads, in one-letter code: V-type ATP synthase subunit D (222 aa).

It belongs to the V-ATPase D subunit family.

In terms of biological role, produces ATP from ADP in the presence of a proton gradient across the membrane. This chain is V-type ATP synthase subunit D, found in Acetivibrio thermocellus (strain ATCC 27405 / DSM 1237 / JCM 9322 / NBRC 103400 / NCIMB 10682 / NRRL B-4536 / VPI 7372) (Clostridium thermocellum).